The sequence spans 238 residues: Ribonuclease PH (238 aa).

Residues arginine 86 and 124–126 (GTR) each bind phosphate.

This sequence belongs to the RNase PH family. As to quaternary structure, homohexameric ring arranged as a trimer of dimers.

The catalysed reaction is tRNA(n+1) + phosphate = tRNA(n) + a ribonucleoside 5'-diphosphate. Phosphorolytic 3'-5' exoribonuclease that plays an important role in tRNA 3'-end maturation. Removes nucleotide residues following the 3'-CCA terminus of tRNAs; can also add nucleotides to the ends of RNA molecules by using nucleoside diphosphates as substrates, but this may not be physiologically important. Probably plays a role in initiation of 16S rRNA degradation (leading to ribosome degradation) during starvation. The chain is Ribonuclease PH from Actinobacillus pleuropneumoniae serotype 7 (strain AP76).